We begin with the raw amino-acid sequence, 393 residues long: Inulin fructotransferase [DFA-I-forming] (393 aa).

It catalyses the reaction Produces alpha-D-fructofuranose beta-D-fructofuranose 1,2':2,1'-dianhydride (DFA I) by successively eliminating the diminishing (2-&gt;1)-beta-D-fructan (inulin) chain from the terminal D-fructosyl-D-fructosyl disaccharide.. The sequence is that of Inulin fructotransferase [DFA-I-forming] from Arthrobacter globiformis.